A 199-amino-acid polypeptide reads, in one-letter code: MQLKRVAEAKLPTFWGDFLIIGFKENQTEHNHIALTYGDLTGSNPVLTRIHSECLTGDALFSSRCDCGIQLSTALRYITEEGQGILIYHRQEGRNIGLLNKIRAYSLQDHGADTVEANQCLGFNADERDFTVCADILKLLNIQTIRLLTNNPQKIEILNKSHIIVTERVPLIVGRNPKNSKYLDTKALKLGHLFSSYYK.

49-53 contributes to the GTP binding site; sequence RIHSE. The Zn(2+) site is built by cysteine 54, cysteine 65, and cysteine 67. GTP contacts are provided by residues glutamine 70, 92–94, and threonine 114; that span reads EGR. The Proton acceptor role is filled by aspartate 126. Residue arginine 128 is the Nucleophile of the active site. Residues threonine 149 and lysine 154 each coordinate GTP.

It belongs to the GTP cyclohydrolase II family. Homodimer. The cofactor is Zn(2+).

The catalysed reaction is GTP + 4 H2O = 2,5-diamino-6-hydroxy-4-(5-phosphoribosylamino)-pyrimidine + formate + 2 phosphate + 3 H(+). It functions in the pathway cofactor biosynthesis; riboflavin biosynthesis; 5-amino-6-(D-ribitylamino)uracil from GTP: step 1/4. Functionally, catalyzes the conversion of GTP to 2,5-diamino-6-ribosylamino-4(3H)-pyrimidinone 5'-phosphate (DARP), formate and pyrophosphate. In Blochmanniella floridana, this protein is GTP cyclohydrolase-2.